The primary structure comprises 253 residues: Putative enoyl-CoA hydratase (253 aa).

Residue E131 is part of the active site.

This sequence belongs to the enoyl-CoA hydratase/isomerase family. As to quaternary structure, homohexamer; dimer of trimers.

The enzyme catalyses a (3S)-3-hydroxyacyl-CoA = a (2E)-enoyl-CoA + H2O. This chain is Putative enoyl-CoA hydratase, found in Thermus thermophilus (strain ATCC 27634 / DSM 579 / HB8).